The primary structure comprises 834 residues: Periplasmic nitrate reductase (834 aa).

The tat-type signal signal peptide spans 1–29; the sequence is MNLTRREFAKANAAAIAAAAAGLPILVRA. Residues 41–97 enclose the 4Fe-4S Mo/W bis-MGD-type domain; that stretch reads LVWNKAPCRFCGTGCSVMVATRDGQVVATHGDIKAEVNRGINCVKGYFLSKIMYGSD. Residues C48, C51, C55, and C83 each coordinate [4Fe-4S] cluster. Mo-bis(molybdopterin guanine dinucleotide) contacts are provided by residues K85, Q152, N177, C181, 214–221, 245–249, 264–266, M375, Q379, N485, 511–512, K534, D561, and 721–730; these read WGSNMAEM, STFEH, QTD, SD, and TGRVLEHWHT. F797 lines the substrate pocket. Mo-bis(molybdopterin guanine dinucleotide)-binding residues include N805 and K822.

It belongs to the prokaryotic molybdopterin-containing oxidoreductase family. NasA/NapA/NarB subfamily. As to quaternary structure, component of the periplasmic nitrate reductase NapAB complex composed of NapA and NapB. Requires [4Fe-4S] cluster as cofactor. Mo-bis(molybdopterin guanine dinucleotide) is required as a cofactor. In terms of processing, predicted to be exported by the Tat system. The position of the signal peptide cleavage has not been experimentally proven.

Its subcellular location is the periplasm. It catalyses the reaction 2 Fe(II)-[cytochrome] + nitrate + 2 H(+) = 2 Fe(III)-[cytochrome] + nitrite + H2O. Functionally, catalytic subunit of the periplasmic nitrate reductase complex NapAB. Receives electrons from NapB and catalyzes the reduction of nitrate to nitrite. The chain is Periplasmic nitrate reductase from Pseudomonas aeruginosa (strain LESB58).